The following is a 374-amino-acid chain: Retron Eco8 reverse transcriptase (374 aa).

A Reverse transcriptase domain is found at glutamate 25–isoleucine 252. Residues aspartate 107, aspartate 200, and aspartate 201 each coordinate Mg(2+).

The protein belongs to the bacterial reverse transcriptase family.

The enzyme catalyses DNA(n) + a 2'-deoxyribonucleoside 5'-triphosphate = DNA(n+1) + diphosphate. In terms of biological role, reverse transcriptase (RT) component of antiviral defense system retron Eco8, composed of this RT, the following endonuclease and a non-coding RNA (ncRNA) encoded between them. Expression of retron Eco8 confers protection against bacteriophages T4, T6, T7 and SECphi4, SECphi6 and SECphi18. At multiplicity of infection (MOI) of 0.02 cultures slow growth when infected with SECphi4 but do not collapse, at MOI 2 cultures collapse. Responsible for synthesis of msDNA (a branched molecule with RNA linked by a 2',5'-phosphodiester bond to ssDNA). The retron transcript serves as primer (from a conserved internal G residue) and template for the reaction, and codes for the RT. This Escherichia coli protein is Retron Eco8 reverse transcriptase.